Consider the following 78-residue polypeptide: Small ribosomal subunit protein bS18 (78 aa).

It belongs to the bacterial ribosomal protein bS18 family. As to quaternary structure, part of the 30S ribosomal subunit. Forms a tight heterodimer with protein bS6.

Binds as a heterodimer with protein bS6 to the central domain of the 16S rRNA, where it helps stabilize the platform of the 30S subunit. The protein is Small ribosomal subunit protein bS18 of Thermobifida fusca (strain YX).